The sequence spans 517 residues: Enantioselective amidase (517 aa).

Catalysis depends on charge relay system residues lysine 96 and serine 173. The active-site Acyl-ester intermediate is serine 197.

This sequence belongs to the amidase family. Homooctamer.

It catalyses the reaction a monocarboxylic acid amide + H2O = a monocarboxylate + NH4(+). The protein is Enantioselective amidase (amdA) of Rhodococcus rhodochrous.